We begin with the raw amino-acid sequence, 346 residues long: NADH-ubiquinone oxidoreductase chain 2 (346 aa).

9 helical membrane passes run 7–27, 59–79, 93–115, 151–171, 178–198, 200–220, 242–262, 275–294, and 325–345; these read AIITSGLILGPIITMSSNHWI, YFLTQAMASYLMLSAALMNMW, ISCTTMTVAMSIKLAAAPFHFWF, TTLLIALGMTSILIGGWGGLN, IMAFSSIAHLGWMYAILTLSP, ILLLTFYLYVAMTATTFLMIN, TMMLLNLMSLAGLPPLTGFAP, LSMFASMMITSSLLSLYFYL, and LATITPLATALMPLLPTLKAI.

Belongs to the complex I subunit 2 family.

Its subcellular location is the mitochondrion inner membrane. The enzyme catalyses a ubiquinone + NADH + 5 H(+)(in) = a ubiquinol + NAD(+) + 4 H(+)(out). In terms of biological role, core subunit of the mitochondrial membrane respiratory chain NADH dehydrogenase (Complex I) that is believed to belong to the minimal assembly required for catalysis. Complex I functions in the transfer of electrons from NADH to the respiratory chain. The immediate electron acceptor for the enzyme is believed to be ubiquinone. In Pelomedusa subrufa (African side-necked turtle), this protein is NADH-ubiquinone oxidoreductase chain 2 (MT-ND2).